An 861-amino-acid polypeptide reads, in one-letter code: Leucine--tRNA ligase (861 aa).

The 'HIGH' region motif lies at 42 to 52 (PYPSGRLHMGH). The 'KMSKS' region motif lies at 619 to 623 (KMSKS). Lys622 provides a ligand contact to ATP.

The protein belongs to the class-I aminoacyl-tRNA synthetase family.

The protein localises to the cytoplasm. The enzyme catalyses tRNA(Leu) + L-leucine + ATP = L-leucyl-tRNA(Leu) + AMP + diphosphate. The chain is Leucine--tRNA ligase from Haemophilus influenzae (strain PittGG).